Consider the following 461-residue polypeptide: F-box protein At3g62230 (461 aa).

Residues 7 to 55 (VDIISTLSDFLLVLIISNLSFKEALSTSRLSTRWRHICRETRNISFRED) enclose the F-box domain.

Part of a SCF (ASK-cullin-F-box) protein ligase complex. Interacts with ASK4.

Its subcellular location is the nucleus. The protein operates within protein modification; protein ubiquitination. Component of SCF(ASK-cullin-F-box) E3 ubiquitin ligase complexes, which may mediate the ubiquitination and subsequent proteasomal degradation of target proteins. In Arabidopsis thaliana (Mouse-ear cress), this protein is F-box protein At3g62230.